An 842-amino-acid chain; its full sequence is Glycogen phosphorylase, muscle form (842 aa).

Residue Ser2 is modified to N-acetylserine. A Phosphoserine; by PHK; in form phosphorylase A modification is found at Ser15. Residues Asp43 and Tyr76 each coordinate AMP. A phosphotyrosine mark is found at Tyr204 and Tyr227. 310 to 319 is an AMP binding site; the sequence is RRFKSSKFGC. At Ser430 the chain carries Phosphoserine. Tyr473 is modified (phosphotyrosine). Ser514 bears the Phosphoserine mark. Position 681 is an N6-(pyridoxal phosphate)lysine (Lys681). Phosphoserine occurs at positions 747 and 748.

This sequence belongs to the glycogen phosphorylase family. In terms of assembly, homodimer. Homotetramer; to form the enzymatically active phosphorylase A. Pyridoxal 5'-phosphate is required as a cofactor. Post-translationally, phosphorylation of Ser-15 converts phosphorylase B (unphosphorylated) to phosphorylase A.

The enzyme catalyses [(1-&gt;4)-alpha-D-glucosyl](n) + phosphate = [(1-&gt;4)-alpha-D-glucosyl](n-1) + alpha-D-glucose 1-phosphate. With respect to regulation, allosterically regulated through the non-covalent binding of metabolites, being activated by AMP and inhibited by ATP, ADP, and glucose-6-phosphate. The activity is also controlled by post-translational modifications including phosphorylation. Functionally, allosteric enzyme that catalyzes the rate-limiting step in glycogen catabolism, the phosphorolytic cleavage of glycogen to produce glucose-1-phosphate, and plays a central role in maintaining cellular and organismal glucose homeostasis. The polypeptide is Glycogen phosphorylase, muscle form (Homo sapiens (Human)).